The sequence spans 280 residues: Dermonecrotic toxin LsSicTox-alphaIA1 (280 aa).

His12 is a catalytic residue. Positions 32 and 34 each coordinate Mg(2+). His48 functions as the Nucleophile in the catalytic mechanism. Disulfide bonds link Cys52/Cys58 and Cys54/Cys197. Asp92 contacts Mg(2+).

This sequence belongs to the arthropod phospholipase D family. Class II subfamily. Mg(2+) serves as cofactor. As to expression, expressed by the venom gland.

The protein resides in the secreted. It carries out the reaction an N-(acyl)-sphingosylphosphocholine = an N-(acyl)-sphingosyl-1,3-cyclic phosphate + choline. It catalyses the reaction an N-(acyl)-sphingosylphosphoethanolamine = an N-(acyl)-sphingosyl-1,3-cyclic phosphate + ethanolamine. The enzyme catalyses a 1-acyl-sn-glycero-3-phosphocholine = a 1-acyl-sn-glycero-2,3-cyclic phosphate + choline. The catalysed reaction is a 1-acyl-sn-glycero-3-phosphoethanolamine = a 1-acyl-sn-glycero-2,3-cyclic phosphate + ethanolamine. In terms of biological role, dermonecrotic toxins cleave the phosphodiester linkage between the phosphate and headgroup of certain phospholipids (sphingolipid and lysolipid substrates), forming an alcohol (often choline) and a cyclic phosphate. This toxin acts on sphingomyelin (SM). It may also act on ceramide phosphoethanolamine (CPE), lysophosphatidylcholine (LPC) and lysophosphatidylethanolamine (LPE), but not on lysophosphatidylserine (LPS), and lysophosphatidylglycerol (LPG). It acts by transphosphatidylation, releasing exclusively cyclic phosphate products as second products. Induces dermonecrosis, hemolysis, increased vascular permeability, edema, inflammatory response, and platelet aggregation. This chain is Dermonecrotic toxin LsSicTox-alphaIA1, found in Loxosceles similis (Brazilian brown spider).